The chain runs to 508 residues: Maturase K (508 aa).

The protein belongs to the intron maturase 2 family. MatK subfamily.

It is found in the plastid. It localises to the chloroplast. In terms of biological role, usually encoded in the trnK tRNA gene intron. Probably assists in splicing its own and other chloroplast group II introns. The chain is Maturase K from Abrus precatorius (Indian licorice).